The sequence spans 340 residues: Speriolin-like protein (340 aa).

2 disordered regions span residues 42-73 (GGGHDLLPPRAHAYPEAGSPGSGVPDFGRFTS) and 94-135 (APLS…KLSP). Phosphoserine is present on S60. Over residues 123-133 (PHSHRGTDRKL) the composition is skewed to basic and acidic residues. S134 is modified (phosphoserine).

It belongs to the speriolin family.

It is found in the cytoplasm. The protein is Speriolin-like protein (SPATC1L) of Homo sapiens (Human).